A 139-amino-acid chain; its full sequence is Small ribosomal subunit protein bS6 (139 aa).

It belongs to the bacterial ribosomal protein bS6 family.

Binds together with bS18 to 16S ribosomal RNA. This is Small ribosomal subunit protein bS6 from Borreliella afzelii (strain PKo) (Borrelia afzelii).